The chain runs to 174 residues: Disulfide bond formation protein B (174 aa).

Residues 1–14 are Cytoplasmic-facing; sequence MLHIFYIYSKSRKF. Residues 15-31 form a helical membrane-spanning segment; the sequence is WAILICSSISLISIALL. Residues 32-49 are Periplasmic-facing; it reads NQFFFLLKPCILCIYQRC. A disulfide bridge links Cys41 with Cys44. A helical membrane pass occupies residues 50-65; it reads SLFGITIAGLIALISP. Over 66–72 the chain is Cytoplasmic; the sequence is KTTLLRL. Residues 73 to 90 traverse the membrane as a helical segment; sequence FSIFIWLYSAIKGLYFSN. Topologically, residues 91-146 are periplasmic; it reads IHMQTTLHPSSSLTCDLFVSFPNWLPLNKWYPIIFDSKISNCYSYPQYLLYLEISQ. A disulfide bridge links Cys105 with Cys132. Residues 147–165 form a helical membrane-spanning segment; the sequence is WMLLFFLIYLIIAIFTIIS. Topologically, residues 166–174 are cytoplasmic; it reads QCHNLFQKK.

The protein belongs to the DsbB family.

The protein localises to the cell inner membrane. In terms of biological role, required for disulfide bond formation in some periplasmic proteins. Acts by oxidizing the DsbA protein. The sequence is that of Disulfide bond formation protein B from Blochmanniella floridana.